We begin with the raw amino-acid sequence, 294 residues long: Nucleotide-binding protein DICTH_1001 (294 aa).

10–17 contributes to the ATP binding site; that stretch reads GLSGAGKS. 61-64 serves as a coordination point for GTP; that stretch reads DIRT.

The protein belongs to the RapZ-like family.

Its function is as follows. Displays ATPase and GTPase activities. The polypeptide is Nucleotide-binding protein DICTH_1001 (Dictyoglomus thermophilum (strain ATCC 35947 / DSM 3960 / H-6-12)).